The primary structure comprises 274 residues: Putative pyruvate, phosphate dikinase regulatory protein (274 aa).

Residue 150–157 participates in ADP binding; the sequence is GPSRTSKT.

This sequence belongs to the pyruvate, phosphate/water dikinase regulatory protein family. PDRP subfamily.

It catalyses the reaction N(tele)-phospho-L-histidyl/L-threonyl-[pyruvate, phosphate dikinase] + ADP = N(tele)-phospho-L-histidyl/O-phospho-L-threonyl-[pyruvate, phosphate dikinase] + AMP + H(+). The catalysed reaction is N(tele)-phospho-L-histidyl/O-phospho-L-threonyl-[pyruvate, phosphate dikinase] + phosphate + H(+) = N(tele)-phospho-L-histidyl/L-threonyl-[pyruvate, phosphate dikinase] + diphosphate. In terms of biological role, bifunctional serine/threonine kinase and phosphorylase involved in the regulation of the pyruvate, phosphate dikinase (PPDK) by catalyzing its phosphorylation/dephosphorylation. The sequence is that of Putative pyruvate, phosphate dikinase regulatory protein from Rickettsia peacockii (strain Rustic).